We begin with the raw amino-acid sequence, 504 residues long: Protein Dok-7 (504 aa).

Residues 4–109 (AALVEGQVKL…WDTRIRYALG (106 aa)) form the PH domain. The IRS-type PTB domain maps to 105–210 (RYALGEVHRF…RGISPTKGPF (106 aa)). 3 disordered regions span residues 210-232 (FGLR…ERVA), 248-348 (LSHS…HSSY), and 371-483 (SLLS…PHAG). Residues 263 to 280 (LSSSSSEASHSDISASSR) show a composition bias toward low complexity. Composition is skewed to polar residues over residues 285 to 297 (PEQS…TSQE), 331 to 341 (GRQSSSDSGIA), and 421 to 430 (PASQGSSDHG).

As to quaternary structure, homodimer. Forms a heterotetramer composed of 2 DOK7 and 2 MUSK molecules which facilitates MUSK trans-autophosphorylation on tyrosine residue and activation. Interacts (via IRS-type PTB domain) with MUSK (via cytoplasmic part); requires MUSK phosphorylation.

Its subcellular location is the cell membrane. The protein resides in the synapse. Probable muscle-intrinsic activator of MUSK that plays an essential role in neuromuscular synaptogenesis. Acts in aneural activation of MUSK and subsequent acetylcholine receptor (AchR) clustering in myotubes. Induces autophosphorylation of MUSK. The protein is Protein Dok-7 (Dok7) of Mus musculus (Mouse).